The following is a 511-amino-acid chain: Steroid 17-alpha-hydroxylase/17,20 lyase (511 aa).

Heme is bound at residue C442.

The protein belongs to the cytochrome P450 family. Heme is required as a cofactor.

The protein resides in the endoplasmic reticulum membrane. It is found in the microsome membrane. It carries out the reaction a C21-steroid + reduced [NADPH--hemoprotein reductase] + O2 = a 17alpha-hydroxy-C21-steroid + oxidized [NADPH--hemoprotein reductase] + H2O + H(+). The enzyme catalyses progesterone + reduced [NADPH--hemoprotein reductase] + O2 = 17alpha-hydroxyprogesterone + oxidized [NADPH--hemoprotein reductase] + H2O + H(+). The catalysed reaction is pregnenolone + reduced [NADPH--hemoprotein reductase] + O2 = 17alpha-hydroxypregnenolone + oxidized [NADPH--hemoprotein reductase] + H2O + H(+). It catalyses the reaction 17alpha-hydroxyprogesterone + reduced [NADPH--hemoprotein reductase] + O2 = androst-4-ene-3,17-dione + acetate + oxidized [NADPH--hemoprotein reductase] + H2O + 2 H(+). It carries out the reaction 17alpha-hydroxyprogesterone + reduced [NADPH--hemoprotein reductase] + O2 = 16alpha,17alpha-dihydroxyprogesterone + oxidized [NADPH--hemoprotein reductase] + H2O + H(+). The enzyme catalyses 16alpha,17alpha-dihydroxyprogesterone + reduced [NADPH--hemoprotein reductase] + O2 = 6beta,16alpha,17alpha-trihydroxyprogesterone + oxidized [NADPH--hemoprotein reductase] + H2O + H(+). The catalysed reaction is 17alpha-hydroxypregnenolone + reduced [NADPH--hemoprotein reductase] + O2 = 3beta-hydroxyandrost-5-en-17-one + acetate + oxidized [NADPH--hemoprotein reductase] + H2O + 2 H(+). It catalyses the reaction 16alpha,17alpha-dihydroxypregnenolone + reduced [NADPH--hemoprotein reductase] + O2 = 3beta,16alpha-dihydroxy-androst-5-en-17-one + acetate + oxidized [NADPH--hemoprotein reductase] + H2O + 2 H(+). It carries out the reaction 3beta-hydroxyandrost-5-en-17-one + reduced [NADPH--hemoprotein reductase] + O2 = 3beta,16alpha-dihydroxy-androst-5-en-17-one + oxidized [NADPH--hemoprotein reductase] + H2O + H(+). The enzyme catalyses androst-4-ene-3,17-dione + reduced [NADPH--hemoprotein reductase] + O2 = 16alpha-hydroxyandrost-4-ene-3,17-dione + oxidized [NADPH--hemoprotein reductase] + H2O + H(+). The protein operates within steroid hormone biosynthesis. It participates in steroid biosynthesis; glucocorticoid biosynthesis. Its activity is regulated as follows. Regulated predominantly by intracellular cAMP levels. The 17,20-lyase activity is stimulated by cytochrome b5, which acts as an allosteric effector increasing the Vmax of the lyase activity. Functionally, a cytochrome P450 monooxygenase involved in corticoid and androgen biosynthesis. Catalyzes 17-alpha hydroxylation of C21 steroids, which is common for both pathways. A second oxidative step, required only for androgen synthesis, involves an acyl-carbon cleavage. The 17-alpha hydroxy intermediates, as part of adrenal glucocorticoids biosynthesis pathway, are precursors of cortisol. Hydroxylates steroid hormones, pregnenolone and progesterone to form 17-alpha hydroxy metabolites, followed by the cleavage of the C17-C20 bond to form C19 steroids, dehydroepiandrosterone (DHEA) and androstenedione. Has 16-alpha hydroxylase activity. Catalyzes 16-alpha hydroxylation of 17-alpha hydroxy pregnenolone, followed by the cleavage of the C17-C20 bond to form 16-alpha-hydroxy DHEA. Also 16-alpha hydroxylates androgens, relevant for estriol synthesis. Mechanistically, uses molecular oxygen inserting one oxygen atom into a substrate, and reducing the second into a water molecule, with two electrons provided by NADPH via cytochrome P450 reductase (CPR; NADPH-ferrihemoprotein reductase). This chain is Steroid 17-alpha-hydroxylase/17,20 lyase (CYP17A1), found in Mesocricetus auratus (Golden hamster).